The following is a 257-amino-acid chain: Deoxyribose-phosphate aldolase (257 aa).

Asp102 (proton donor/acceptor) is an active-site residue. Lys166 acts as the Schiff-base intermediate with acetaldehyde in catalysis. Catalysis depends on Lys198, which acts as the Proton donor/acceptor.

The protein belongs to the DeoC/FbaB aldolase family. DeoC type 2 subfamily.

The protein resides in the cytoplasm. The catalysed reaction is 2-deoxy-D-ribose 5-phosphate = D-glyceraldehyde 3-phosphate + acetaldehyde. It participates in carbohydrate degradation; 2-deoxy-D-ribose 1-phosphate degradation; D-glyceraldehyde 3-phosphate and acetaldehyde from 2-deoxy-alpha-D-ribose 1-phosphate: step 2/2. In terms of biological role, catalyzes a reversible aldol reaction between acetaldehyde and D-glyceraldehyde 3-phosphate to generate 2-deoxy-D-ribose 5-phosphate. This is Deoxyribose-phosphate aldolase from Shewanella woodyi (strain ATCC 51908 / MS32).